The chain runs to 447 residues: uncharacterized protein (447 aa).

The disordered stretch occupies residues 392-435 (RFTKPSSSVAKSTSPSLRNSGSDESDLNQSDSDKEDERVVPVPK). The segment covering 395–407 (KPSSSVAKSTSPS) has biased composition (low complexity). Residues 408–421 (LRNSGSDESDLNQS) show a composition bias toward polar residues.

This is an uncharacterized protein from Invertebrate iridescent virus 3 (IIV-3).